A 276-amino-acid polypeptide reads, in one-letter code: Diaminopimelate epimerase (276 aa).

The substrate site is built by asparagine 13, glutamine 46, and asparagine 66. Cysteine 75 (proton donor) is an active-site residue. Substrate contacts are provided by residues 76–77 (GN), asparagine 159, asparagine 192, and 210–211 (ER). Catalysis depends on cysteine 219, which acts as the Proton acceptor. 220–221 (GT) is a substrate binding site.

This sequence belongs to the diaminopimelate epimerase family. As to quaternary structure, homodimer.

It is found in the cytoplasm. It catalyses the reaction (2S,6S)-2,6-diaminopimelate = meso-2,6-diaminopimelate. It participates in amino-acid biosynthesis; L-lysine biosynthesis via DAP pathway; DL-2,6-diaminopimelate from LL-2,6-diaminopimelate: step 1/1. Functionally, catalyzes the stereoinversion of LL-2,6-diaminopimelate (L,L-DAP) to meso-diaminopimelate (meso-DAP), a precursor of L-lysine and an essential component of the bacterial peptidoglycan. The polypeptide is Diaminopimelate epimerase (Stutzerimonas stutzeri (strain A1501) (Pseudomonas stutzeri)).